The sequence spans 623 residues: MNVHTPRKDEALTVTTGPLPASTKIFTAPEGFPGLKVPFREIALHPSAKEPPVRVYDTSGPYTDPTAQIDLERGLPRTREAWLEARGGTELYEGRDVKPEDNGNVGEKHLARAFPVRNLPRRGLPGHPVTQYEFAKAGIVTAEMAYIAERENMGRKQAAANAAHRIAEGESFGADIPEFITPEFVRDEVAAGRAIIPSNINHPELEPMIIGRNFLVKINANIGNSAVASSVAEEVDKMVWAIRWGADNVMDLSTGRNIHNTREWIIRNSPVPIGTVPIYQALEKVDGIAENLTWEVYRDTLIEQAEQGVDYFTIHAGVRLAYVPLTAKRVTGIVSRGGSIMAKWCLAHHKESFLYTHFEEICDIMRQYDVSFSLGDGLRPGSIADANDEAQFAELETLGELTQIAWAKGCQVMIEGPGHVPMHKIKVNMDKQLKHCGGAPFYTLGPLTTDIAPGYDHITSGIGAAMIGWFGCAMLCYVTPKEHLGLPDRADVKEGVITYKIAAHAADLAKGHPAAQLRDDALSRARFEFRWEDQFNLALDPERAKEFHDRTLPKEAHKVAHFCSMCGPKFCSMKITQEVRDYAESGMADMASEFRNSGGEIYLEEADAAVKASNRALGGKAAE.

Substrate is bound by residues N221, M250, Y279, H315, 335 to 337 (SRG), 376 to 379 (DGLR), and E415. Residue H419 coordinates Zn(2+). Y442 contributes to the substrate binding site. Residue H483 coordinates Zn(2+). The [4Fe-4S] cluster site is built by C563, C566, and C571.

It belongs to the ThiC family. Homodimer. [4Fe-4S] cluster serves as cofactor.

The enzyme catalyses 5-amino-1-(5-phospho-beta-D-ribosyl)imidazole + S-adenosyl-L-methionine = 4-amino-2-methyl-5-(phosphooxymethyl)pyrimidine + CO + 5'-deoxyadenosine + formate + L-methionine + 3 H(+). Its pathway is cofactor biosynthesis; thiamine diphosphate biosynthesis. In terms of biological role, catalyzes the synthesis of the hydroxymethylpyrimidine phosphate (HMP-P) moiety of thiamine from aminoimidazole ribotide (AIR) in a radical S-adenosyl-L-methionine (SAM)-dependent reaction. The chain is Phosphomethylpyrimidine synthase from Parvibaculum lavamentivorans (strain DS-1 / DSM 13023 / NCIMB 13966).